A 248-amino-acid chain; its full sequence is Triosephosphate isomerase (248 aa).

The substrate site is built by Asn10 and Lys12. Catalysis depends on His95, which acts as the Electrophile. The Proton acceptor role is filled by Glu165.

This sequence belongs to the triosephosphate isomerase family. Homodimer.

It catalyses the reaction D-glyceraldehyde 3-phosphate = dihydroxyacetone phosphate. It participates in carbohydrate biosynthesis; gluconeogenesis. The protein operates within carbohydrate degradation; glycolysis; D-glyceraldehyde 3-phosphate from glycerone phosphate: step 1/1. This is Triosephosphate isomerase (TPI1) from Eremothecium gossypii (strain ATCC 10895 / CBS 109.51 / FGSC 9923 / NRRL Y-1056) (Yeast).